Reading from the N-terminus, the 82-residue chain is Acyl carrier protein (82 aa).

The Carrier domain occupies 4 to 79 (PEMEARLKQI…DALNYIEQKL (76 aa)). At Ser-39 the chain carries O-(pantetheine 4'-phosphoryl)serine.

This sequence belongs to the acyl carrier protein (ACP) family. 4'-phosphopantetheine is transferred from CoA to a specific serine of apo-ACP by AcpS. This modification is essential for activity because fatty acids are bound in thioester linkage to the sulfhydryl of the prosthetic group.

The protein resides in the cytoplasm. It participates in lipid metabolism; fatty acid biosynthesis. Functionally, carrier of the growing fatty acid chain in fatty acid biosynthesis. In Roseiflexus castenholzii (strain DSM 13941 / HLO8), this protein is Acyl carrier protein.